The sequence spans 707 residues: UvrABC system protein C (707 aa).

Residues 14–94 (AEPGCYLMKD…IKKHRPRFNV (81 aa)) form the GIY-YIG domain. Positions 206-241 (GELVERLRGRMAGAAEGLRFEEAARLRDQLQAVERS) constitute a UVR domain. The tract at residues 655-707 (DAPPIAADEPSGAPAGAPGGGPAEASPEAVAAATEAEIDAALADEDASPEPAA) is disordered. 2 stretches are compositionally biased toward low complexity: residues 660-670 (AADEPSGAPAG) and 677-689 (AEASPEAVAAATE). Acidic residues predominate over residues 690-707 (AEIDAALADEDASPEPAA).

This sequence belongs to the UvrC family. As to quaternary structure, interacts with UvrB in an incision complex.

It is found in the cytoplasm. Functionally, the UvrABC repair system catalyzes the recognition and processing of DNA lesions. UvrC both incises the 5' and 3' sides of the lesion. The N-terminal half is responsible for the 3' incision and the C-terminal half is responsible for the 5' incision. In Anaeromyxobacter dehalogenans (strain 2CP-1 / ATCC BAA-258), this protein is UvrABC system protein C.